We begin with the raw amino-acid sequence, 123 residues long: MLQNSELLHEYLPIAIFFGIAVLVSGLIMMLPNLLSTKKYNKDKLEPYECGFAPFSDARSKFDIRFYLVAILFIIFDLEITFLVPWAISLNTIGKIGFFSMMFFLFVLIIGFIYEWTKGALDW.

A run of 3 helical transmembrane segments spans residues 11–31, 68–88, and 93–113; these read YLPI…IMML, LVAI…PWAI, and IGKI…IGFI.

It belongs to the complex I subunit 3 family. As to quaternary structure, NDH-1 is composed of 14 different subunits. Subunits NuoA, H, J, K, L, M, N constitute the membrane sector of the complex.

It is found in the cell inner membrane. The catalysed reaction is a quinone + NADH + 5 H(+)(in) = a quinol + NAD(+) + 4 H(+)(out). NDH-1 shuttles electrons from NADH, via FMN and iron-sulfur (Fe-S) centers, to quinones in the respiratory chain. The immediate electron acceptor for the enzyme in this species is believed to be ubiquinone. Couples the redox reaction to proton translocation (for every two electrons transferred, four hydrogen ions are translocated across the cytoplasmic membrane), and thus conserves the redox energy in a proton gradient. This is NADH-quinone oxidoreductase subunit A from Rickettsia typhi (strain ATCC VR-144 / Wilmington).